The chain runs to 356 residues: Naringenin,2-oxoglutarate 3-dioxygenase (356 aa).

Residues 188–292 (CVDMDQKVVV…RLSIATFQNP (105 aa)) form the Fe2OG dioxygenase domain. Positions 215, 217, and 273 each coordinate Fe cation. Arginine 283 contacts 2-oxoglutarate.

It belongs to the iron/ascorbate-dependent oxidoreductase family. It depends on Fe(2+) as a cofactor. L-ascorbate serves as cofactor.

The catalysed reaction is a (2S)-flavan-4-one + 2-oxoglutarate + O2 = a (2R,3R)-dihydroflavonol + succinate + CO2. It functions in the pathway secondary metabolite biosynthesis; flavonoid biosynthesis. Catalyzes the 3-beta-hydroxylation of 2S-flavanones to 2R,3R-dihydroflavonols which are intermediates in the biosynthesis of flavonols, anthocyanidins, catechins and proanthocyanidins in plants. This is Naringenin,2-oxoglutarate 3-dioxygenase (FHT) from Callistephus chinensis (China aster).